The sequence spans 258 residues: Imidazole glycerol phosphate synthase subunit HisF (258 aa).

Active-site residues include Asp11 and Asp130.

It belongs to the HisA/HisF family. In terms of assembly, heterodimer of HisH and HisF.

It is found in the cytoplasm. The catalysed reaction is 5-[(5-phospho-1-deoxy-D-ribulos-1-ylimino)methylamino]-1-(5-phospho-beta-D-ribosyl)imidazole-4-carboxamide + L-glutamine = D-erythro-1-(imidazol-4-yl)glycerol 3-phosphate + 5-amino-1-(5-phospho-beta-D-ribosyl)imidazole-4-carboxamide + L-glutamate + H(+). It participates in amino-acid biosynthesis; L-histidine biosynthesis; L-histidine from 5-phospho-alpha-D-ribose 1-diphosphate: step 5/9. IGPS catalyzes the conversion of PRFAR and glutamine to IGP, AICAR and glutamate. The HisF subunit catalyzes the cyclization activity that produces IGP and AICAR from PRFAR using the ammonia provided by the HisH subunit. The protein is Imidazole glycerol phosphate synthase subunit HisF of Roseiflexus sp. (strain RS-1).